Reading from the N-terminus, the 350-residue chain is Phenylalanine--tRNA ligase alpha subunit (350 aa).

Glutamate 262 lines the Mg(2+) pocket.

This sequence belongs to the class-II aminoacyl-tRNA synthetase family. Phe-tRNA synthetase alpha subunit type 1 subfamily. Tetramer of two alpha and two beta subunits. Mg(2+) is required as a cofactor.

It localises to the cytoplasm. It carries out the reaction tRNA(Phe) + L-phenylalanine + ATP = L-phenylalanyl-tRNA(Phe) + AMP + diphosphate + H(+). This Thermus thermophilus (strain ATCC BAA-163 / DSM 7039 / HB27) protein is Phenylalanine--tRNA ligase alpha subunit.